The chain runs to 329 residues: MTEFIPFIILIGVAFVILSIILSFVPVGLWITAQFSGVKVGIFTLVGMRFRRVQPIRIINPLIKATKAGIDINIDKLEAHYLAGGDVNTLVDALIAAQRAEINLPFERAAAIDLAGRQVLEAVQVSVNPKVIETPKIAAVAKDGIEVMARARVTVRANIERLVGGAGEETIIARVGEGIVTTVGSATTHKHVLENPDMISKTVLSKGLDAGTAYEILSIDIADIDIGRNIGAQLQTDQADADKRIAQAKAEERRAMAVAKEQEMKAAVQEMRAKVVEAEAEVPKALATALREGKMGVMDYYNMKNIMADTDMRDSISKVAPNEKKYEEE.

2 helical membrane passes run Phe4–Phe24 and Val27–Gly47.

Belongs to the flotillin-like FloA family. As to quaternary structure, homooligomerizes.

It localises to the cell membrane. Its subcellular location is the membrane raft. Functionally, found in functional membrane microdomains (FMM) that may be equivalent to eukaryotic membrane rafts. FMMs are highly dynamic and increase in number as cells age. Flotillins are thought to be important factors in membrane fluidity. In Alkaliphilus metalliredigens (strain QYMF), this protein is Flotillin-like protein FloA.